A 339-amino-acid polypeptide reads, in one-letter code: Phosphoribosylformylglycinamidine cyclo-ligase (339 aa).

This sequence belongs to the AIR synthase family.

Its subcellular location is the cytoplasm. The enzyme catalyses 2-formamido-N(1)-(5-O-phospho-beta-D-ribosyl)acetamidine + ATP = 5-amino-1-(5-phospho-beta-D-ribosyl)imidazole + ADP + phosphate + H(+). It participates in purine metabolism; IMP biosynthesis via de novo pathway; 5-amino-1-(5-phospho-D-ribosyl)imidazole from N(2)-formyl-N(1)-(5-phospho-D-ribosyl)glycinamide: step 2/2. This is Phosphoribosylformylglycinamidine cyclo-ligase from Desulfitobacterium hafniense (strain DSM 10664 / DCB-2).